A 581-amino-acid chain; its full sequence is Pre-mRNA 3'-end-processing factor FIP1 (581 aa).

Basic and acidic residues-rich tracts occupy residues 1–10 (MSAGEVERLV) and 32–42 (VHVHSDLAKDL). 3 disordered regions span residues 1 to 95 (MSAG…EDDV), 211 to 282 (TVQQ…ESPD), and 320 to 581 (RSAT…APAE). The tract at residues 1–110 (MSAGEVERLV…DIKTGAPQYG (110 aa)) is sufficient for interaction with PAPOLA. The segment at 1 to 332 (MSAGEVERLV…TEVDNNFSKP (332 aa)) is necessary for stimulating PAPOLA activity. 2 stretches are compositionally biased toward acidic residues: residues 43–54 (DENEVERPEEEN) and 80–94 (TEDD…DEDD). A phosphoserine mark is found at Ser-84, Ser-86, and Ser-88. A sufficient for interaction with CPSF4 region spans residues 136–219 (KGVDLDAPGS…ITVQQGRTGN (84 aa)). The segment covering 247–267 (SRNSTSSQSQTSTASRKASSS) has biased composition (low complexity). Basic and acidic residues predominate over residues 271–282 (WQDRYGRAESPD). Ser-280 carries the post-translational modification Phosphoserine. The segment covering 320–330 (RSATEVDNNFS) has biased composition (polar residues). The span at 331 to 389 (KPPPFFPPGAPPTHLPPPPFLPPPPTVSTAPPLIPPPGIPITVPPPGFPPPPGAPPPSL) shows a compositional bias: pro residues. At Tyr-411 the chain carries Phosphotyrosine. Positions 419-435 (LTSSAPSWPSLVDTTKQ) are enriched in polar residues. The segment at 428–581 (SLVDTTKQWD…QESTEAAPAE (154 aa)) is sufficient for interaction with CPSF1 and CSTF3. Basic and acidic residues predominate over residues 439 to 479 (YARREKDRDRDRERDRDRERERDRDRERERTRERERERDHS). Residues 442–477 (REKDRDRDRERDRDRERERDRDRERERTRERERERD) are arg/Asp/Glu-rich domain. Residues 478–535 (HSPTPSVFNSDEERYRYREYAERGYERHRASREKEERHRERRHREKEETRHKSSRSNS) are sufficient for interaction with AHCYL1. Position 479 is a phosphoserine (Ser-479). Phosphothreonine is present on Thr-481. A phosphoserine mark is found at Ser-483 and Ser-487. The span at 488–515 (DEERYRYREYAERGYERHRASREKEERH) shows a compositional bias: basic and acidic residues. Basic residues predominate over residues 529-538 (KSSRSNSRRR). Ser-541 carries the phosphoserine modification. The segment covering 547 to 557 (HRRHKHKKSKR) has biased composition (basic residues).

This sequence belongs to the FIP1 family. In terms of assembly, component of the cleavage and polyadenylation specificity factor (CPSF) complex, composed of CPSF1, CPSF2, CPSF3, CPSF4 and FIP1L1. Found in a complex with CPSF1, FIP1L1 and PAPOLA. Interacts with CPSF1, CPSF4, CSTF2 and CSTF3. Interacts with AHCYL1 (when phosphorylated); the interaction is direct and associates AHCYL1 with the CPSF complex and RNA. Interacts with PAPOLA; the interaction seems to be increased by the interaction with AHCYL1. Interacts with NUDT21/CPSF5; this interaction occurs in a RNA sequence-specific manner. Interacts (preferentially via unphosphorylated form and Arg/Glu/Asp-rich domain) with CPSF6 (via Arg/Ser-rich domain); this interaction mediates, at least in part, the interaction between the CFIm and CPSF complexes and may be inhibited by CPSF6 hyper-phosphorylation. Interacts (preferentially via unphosphorylated form and Arg/Asp/Glu-rich domain) with CPSF7 (via Arg/Ser-rich domain); this interaction mediates, at least in part, the interaction between the CFIm and CPSF complexes and may be inhibited by CPSF7 hyper-phosphorylation.

The protein resides in the nucleus. Component of the cleavage and polyadenylation specificity factor (CPSF) complex that plays a key role in pre-mRNA 3'-end formation, recognizing the AAUAAA signal sequence and interacting with poly(A) polymerase and other factors to bring about cleavage and poly(A) addition. FIP1L1 contributes to poly(A) site recognition and stimulates poly(A) addition. Binds to U-rich RNA sequence elements surrounding the poly(A) site. May act to tether poly(A) polymerase to the CPSF complex. The chain is Pre-mRNA 3'-end-processing factor FIP1 (Fip1l1) from Mus musculus (Mouse).